Here is a 471-residue protein sequence, read N- to C-terminus: MIEIQFYNSLSGRKEKFSPSDPNRVTVYSCGPTVYNFAHIGNLRAFLFVDVLRRSLKLLGYGVDMTMNITDIDDKIIRDSIASKKSIIEFTAPWTKAFFEDLKTVSAEILEHYPKATDSIPEMVDIIQKLQKKGLVYKKDESLYFSIQKFQNYGKLSKIDTSGMKTGTRYDTDEYEKEDVRDFVLWKSPKLEGETSWDTLVGTGRPGWHLECSAMIRKVYGSGVDIHTGGVDLLFPHHENEIAQSEGAFPEESFVKTWLHSEHLLVDGQKMSKSKGNFYTLRDLIQQGLDPKAIRFLLISTHYRSKLNFSTDRIAEASANIRKIQNCLDRILELEPDIKADFYFLFSIPFVQTWKKEFEESLADDLNISKALAVVFESVKQINSLLDTNQSDSKQRIEYIQILAYFDRILGVLNFESKKDLLDSEIDSLIEERQIARKNKDFARSDAIRDQLLAQGILIEDTKEGIRWRKK.

Cysteine 30 contributes to the Zn(2+) binding site. Residues 32 to 42 (PTVYNFAHIGN) carry the 'HIGH' region motif. Zn(2+) is bound by residues cysteine 212, histidine 237, and glutamate 241. The short motif at 270 to 274 (KMSKS) is the 'KMSKS' region element. Lysine 273 serves as a coordination point for ATP.

This sequence belongs to the class-I aminoacyl-tRNA synthetase family. Monomer. It depends on Zn(2+) as a cofactor.

It is found in the cytoplasm. The catalysed reaction is tRNA(Cys) + L-cysteine + ATP = L-cysteinyl-tRNA(Cys) + AMP + diphosphate. In Leptospira interrogans serogroup Icterohaemorrhagiae serovar Lai (strain 56601), this protein is Cysteine--tRNA ligase.